We begin with the raw amino-acid sequence, 189 residues long: MASYSTNEFKGGLKILIDGNPMVIVENEFVKPGKGQAFNRVKLKNLLNDRVVEKTFKSGESVEAADVEELNAVYSYFDGDSYVFMHPETFEQYMVSQEALGETKKWLKDQDEYQIILFNGQPISIIAPNFVNLEIVETDPGLKGDTAGTGGKPATLSTGAVVRVPLFVQTGEIIKVDTRTSTYVSRVKD.

Lys34 is modified (N6-(3,6-diaminohexanoyl)-5-hydroxylysine).

Belongs to the elongation factor P family. Post-translationally, may be beta-lysylated on the epsilon-amino group of Lys-34 by the combined action of EpmA and EpmB, and then hydroxylated on the C5 position of the same residue by EpmC (if this protein is present). Lysylation is critical for the stimulatory effect of EF-P on peptide-bond formation. The lysylation moiety may extend toward the peptidyltransferase center and stabilize the terminal 3-CCA end of the tRNA. Hydroxylation of the C5 position on Lys-34 may allow additional potential stabilizing hydrogen-bond interactions with the P-tRNA.

The protein localises to the cytoplasm. It participates in protein biosynthesis; polypeptide chain elongation. Involved in peptide bond synthesis. Alleviates ribosome stalling that occurs when 3 or more consecutive Pro residues or the sequence PPG is present in a protein, possibly by augmenting the peptidyl transferase activity of the ribosome. Modification of Lys-34 is required for alleviation. The chain is Elongation factor P from Francisella philomiragia subsp. philomiragia (strain ATCC 25017 / CCUG 19701 / FSC 153 / O#319-036).